The chain runs to 411 residues: Probable tRNA pseudouridine synthase D (411 aa).

Asp81 (nucleophile) is an active-site residue. Positions 154–375 (GTPNFFGLQR…SGSYRPADTL (222 aa)) constitute a TRUD domain.

This sequence belongs to the pseudouridine synthase TruD family.

It carries out the reaction uridine(13) in tRNA = pseudouridine(13) in tRNA. Functionally, could be responsible for synthesis of pseudouridine from uracil-13 in transfer RNAs. In Archaeoglobus fulgidus (strain ATCC 49558 / DSM 4304 / JCM 9628 / NBRC 100126 / VC-16), this protein is Probable tRNA pseudouridine synthase D.